A 376-amino-acid polypeptide reads, in one-letter code: UPF0754 membrane protein SSP0953 (376 aa).

The next 2 membrane-spanning stretches (helical) occupy residues phenylalanine 4 to isoleucine 24 and phenylalanine 356 to valine 376.

The protein belongs to the UPF0754 family.

Its subcellular location is the cell membrane. The protein is UPF0754 membrane protein SSP0953 of Staphylococcus saprophyticus subsp. saprophyticus (strain ATCC 15305 / DSM 20229 / NCIMB 8711 / NCTC 7292 / S-41).